A 450-amino-acid chain; its full sequence is Molybdate-anion transporter (450 aa).

Helical transmembrane passes span 1-21 (MLVT…GLEL), 43-63 (LDFY…APYL), 79-99 (ILYV…SSLV), 128-148 (FVLL…FSAF), 174-194 (AAFW…AVAS), 195-215 (WIGL…ALAG), 249-269 (VLLL…FVFL), 278-298 (GAPL…GSSL), 311-331 (PMHL…MLTF), 344-364 (FIAF…MSFL), 376-396 (GVLN…LLVL), and 409-429 (FSIC…LFTV).

It belongs to the major facilitator superfamily.

It is found in the cell membrane. Its function is as follows. Mediates high-affinity intracellular uptake of the rare oligo-element molybdenum. The chain is Molybdate-anion transporter (MFSD5) from Pongo abelii (Sumatran orangutan).